The primary structure comprises 431 residues: tRNA(Ile)-lysidine synthase (431 aa).

25–30 (SGGLDS) lines the ATP pocket.

This sequence belongs to the tRNA(Ile)-lysidine synthase family.

It localises to the cytoplasm. It carries out the reaction cytidine(34) in tRNA(Ile2) + L-lysine + ATP = lysidine(34) in tRNA(Ile2) + AMP + diphosphate + H(+). In terms of biological role, ligates lysine onto the cytidine present at position 34 of the AUA codon-specific tRNA(Ile) that contains the anticodon CAU, in an ATP-dependent manner. Cytidine is converted to lysidine, thus changing the amino acid specificity of the tRNA from methionine to isoleucine. The chain is tRNA(Ile)-lysidine synthase from Legionella pneumophila (strain Paris).